Reading from the N-terminus, the 362-residue chain is Prostaglandin E2 receptor EP2 subtype (362 aa).

The Extracellular segment spans residues 1-24 (MDNFLNDSKLMEDCKSRQWLLSGE). N-linked (GlcNAc...) asparagine glycosylation is present at Asn6. A helical membrane pass occupies residues 25–48 (SPAISSVMFSAGVLGNLIALALLA). Residues 49–66 (RRWRGDTGCSAGSRTSIS) are Cytoplasmic-facing. Residues 67–92 (LFHVLVTELVLTDLLGTCLISPVVLA) traverse the membrane as a helical segment. The Extracellular portion of the chain corresponds to 93 to 112 (SYSRNQTLVALAPESHACTY). A disulfide bond links Cys110 and Cys188. A helical transmembrane segment spans residues 113-133 (FAFTMTFFSLATMLMLFAMAL). The Cytoplasmic segment spans residues 134 to 152 (ERYLSIGYPYFYRRHLSRR). Residues 153–177 (GGLAVLPVIYGASLLFCSLPLLNYG) form a helical membrane-spanning segment. The Extracellular portion of the chain corresponds to 178 to 199 (EYVQYCPGTWCFIRHGRTAYLQ). The chain crosses the membrane as a helical span at residues 200-224 (LYATMLLLLIVAVLACNISVILNLI). Residues 225–262 (RMHRRSRRSRCGLSGSSLRGPGSRRRGERTSMAEETDH) lie on the Cytoplasmic side of the membrane. The interval 234–255 (RCGLSGSSLRGPGSRRRGERTS) is disordered. Positions 235–245 (CGLSGSSLRGP) are enriched in low complexity. Residues 263-286 (LILLAIMTITFAICSLPFTIFAYM) traverse the membrane as a helical segment. Over 287-299 (DETSSLKEKWDLR) the chain is Extracellular. A helical membrane pass occupies residues 300-323 (ALRFLSVNSIIDPWVFAILRPPVL). Topologically, residues 324–362 (RLMRSVLCCRTSLRTQEAQQTSCSTQSSASKQTDLCGQL) are cytoplasmic.

It belongs to the G-protein coupled receptor 1 family.

The protein resides in the cell membrane. Its function is as follows. Receptor for prostaglandin E2 (PGE2). The activity of this receptor is mediated by G(s) proteins that stimulate adenylate cyclase. The subsequent raise in intracellular cAMP is responsible for the relaxing effect of this receptor on smooth muscle. The protein is Prostaglandin E2 receptor EP2 subtype (Ptger2) of Mus musculus (Mouse).